A 104-amino-acid polypeptide reads, in one-letter code: Cell division topological specificity factor (104 aa).

This sequence belongs to the MinE family.

Its function is as follows. Prevents the cell division inhibition by proteins MinC and MinD at internal division sites while permitting inhibition at polar sites. This ensures cell division at the proper site by restricting the formation of a division septum at the midpoint of the long axis of the cell. This Sorangium cellulosum (strain So ce56) (Polyangium cellulosum (strain So ce56)) protein is Cell division topological specificity factor.